A 119-amino-acid chain; its full sequence is MDILCSTLLLLTVPSWVLSQVTLKESGPALVKPTQTLTLTCTFSGFSLSTSGMRVSWIRQPPGKALEWLARIDWDDDKFYSTSLKTRLTISKDTSKNQVVLTMTNMDPVDTATYYCARI.

The N-terminal stretch at 1-19 (MDILCSTLLLLTVPSWVLS) is a signal peptide. At Q20 the chain carries Pyrrolidone carboxylic acid. The interval 20–44 (QVTLKESGPALVKPTQTLTLTCTFS) is framework-1. Positions 20 to 119 (QVTLKESGPA…DTATYYCARI (100 aa)) constitute an Ig-like domain. C41 and C116 are disulfide-bonded. The tract at residues 45 to 54 (GFSLSTSGMR) is complementarity-determining-1. The framework-2 stretch occupies residues 55 to 71 (VSWIRQPPGKALEWLAR). Residues 72-78 (IDWDDDK) form a complementarity-determining-2 region. Residues 79-116 (FYSTSLKTRLTISKDTSKNQVVLTMTNMDPVDTATYYC) are framework-3. Residues 117-119 (ARI) form a complementarity-determining-3 region.

As to quaternary structure, immunoglobulins are composed of two identical heavy chains and two identical light chains; disulfide-linked.

The protein resides in the secreted. The protein localises to the cell membrane. Its function is as follows. V region of the variable domain of immunoglobulin heavy chains that participates in the antigen recognition. Immunoglobulins, also known as antibodies, are membrane-bound or secreted glycoproteins produced by B lymphocytes. In the recognition phase of humoral immunity, the membrane-bound immunoglobulins serve as receptors which, upon binding of a specific antigen, trigger the clonal expansion and differentiation of B lymphocytes into immunoglobulins-secreting plasma cells. Secreted immunoglobulins mediate the effector phase of humoral immunity, which results in the elimination of bound antigens. The antigen binding site is formed by the variable domain of one heavy chain, together with that of its associated light chain. Thus, each immunoglobulin has two antigen binding sites with remarkable affinity for a particular antigen. The variable domains are assembled by a process called V-(D)-J rearrangement and can then be subjected to somatic hypermutations which, after exposure to antigen and selection, allow affinity maturation for a particular antigen. The sequence is that of Immunoglobulin heavy variable 2-70D from Homo sapiens (Human).